Here is a 737-residue protein sequence, read N- to C-terminus: Ribosome-releasing factor 2, mitochondrial (737 aa).

Residues 1–29 constitute a mitochondrion transit peptide; that stretch reads MLKYALHSGGMPRNRLLRQLSAHIFRRSY. Residues 31 to 310 form the tr-type G domain; it reads SNIRNIGILA…AVNTYLPAPE (280 aa). GTP contacts are provided by residues 40–47, 104–108, and 158–161; these read AHIDAGKT, DTPGH, and NKMD.

Belongs to the TRAFAC class translation factor GTPase superfamily. Classic translation factor GTPase family. EF-G/EF-2 subfamily.

The protein localises to the mitochondrion. Its function is as follows. Mitochondrial GTPase that mediates the disassembly of ribosomes from messenger RNA at the termination of mitochondrial protein biosynthesis. Not involved in the GTP-dependent ribosomal translocation step during translation elongation. The chain is Ribosome-releasing factor 2, mitochondrial from Drosophila pseudoobscura pseudoobscura (Fruit fly).